The sequence spans 115 residues: U3-lycotoxin-Ls1d (115 aa).

The signal sequence occupies residues 1-20 (MKFVLLFGVLLVTLFSYSSA). The propeptide occupies 21 to 44 (EMLDDFDQADEDELLSLIEKEEAR). 4 disulfide bridges follow: C48-C63, C55-C72, C62-C87, and C74-C85.

It belongs to the neurotoxin 19 (CSTX) family. 01 subfamily. Expressed by the venom gland.

The protein resides in the secreted. This chain is U3-lycotoxin-Ls1d, found in Lycosa singoriensis (Wolf spider).